The chain runs to 577 residues: AP-1-like transcription factor napA (577 aa).

The disordered stretch occupies residues 25–178; it reads ALSSNNPPSK…RAFRERKEKH (154 aa). Residues 26 to 64 show a composition bias toward polar residues; it reads LSSNNPPSKQKQNVQKPELGTNPTNTPGQASTGSFNTSP. Composition is skewed to basic and acidic residues over residues 109 to 121 and 133 to 144; these read SDDH…RKDS and RESDDKSDDKTS. Short sequence motifs (bipartite nuclear localization signal) lie at residues 117 to 124 and 144 to 151; these read KRKDSNSN and SKKPGRKP. In terms of domain architecture, bZIP spans 154 to 217; the sequence is SEPTSKRKAQ…ERLQVELREY (64 aa). The segment at 159-180 is basic motif; the sequence is KRKAQNRAAQRAFRERKEKHLK. The tract at residues 182–189 is leucine-zipper; the sequence is LEAKVEEL. Positions 294–386 are disordered; it reads QAANGRASSS…NQAKESHEGH (93 aa). Residues 299 to 319 show a composition bias toward polar residues; sequence RASSSASPKTVTSNNPATKSP. Residues 347-364 are compositionally biased toward low complexity; the sequence is TSDSPSSSSDSHQFLSSS. The segment covering 365–377 has biased composition (polar residues); the sequence is GTSPEPSVQSPDN. The tract at residues 525-558 is c-CRD; that stretch reads CTKIWDRLQSMEKFRNGEIDVDNLCSELRTKARC. The Nuclear export signal signature appears at 543-550; that stretch reads IDVDNLCS.

Belongs to the bZIP family. YAP subfamily. Post-translationally, oxidative stress induces conformational changes through oxidation of cysteine residues, masking the nuclear export signal, thus abolishing nuclear export by CRM1/exportin 1.

It localises to the nucleus. Its subcellular location is the cytoplasm. Transcription activator involved in oxidative stress response, specifically during hyphal growth. Regulates the transcription of genes encoding antioxidant enzymes and components of the cellular thiol-reducing pathways including the mycelium-specific catalase catB (but not the conidia-specific catalase catA), thioredoxin reductase trxB and thioredoxin thiO. Preferentially binds to promoters with the core binding site 5'-TTA[CG]TAA-3'. Activity of the transcription factor is controlled through oxidation of specific cysteine residues resulting in the alteration of its subcellular location. Activation by hydroperoxides induces nuclear accumulation and as a result NapA transcriptional activity. The chain is AP-1-like transcription factor napA from Emericella nidulans (strain FGSC A4 / ATCC 38163 / CBS 112.46 / NRRL 194 / M139) (Aspergillus nidulans).